The sequence spans 180 residues: Crossover junction endodeoxyribonuclease RuvC (180 aa).

Residues aspartate 7, glutamate 66, and aspartate 138 contribute to the active site. The Mg(2+) site is built by aspartate 7, glutamate 66, and aspartate 138.

The protein belongs to the RuvC family. As to quaternary structure, homodimer which binds Holliday junction (HJ) DNA. The HJ becomes 2-fold symmetrical on binding to RuvC with unstacked arms; it has a different conformation from HJ DNA in complex with RuvA. In the full resolvosome a probable DNA-RuvA(4)-RuvB(12)-RuvC(2) complex forms which resolves the HJ. It depends on Mg(2+) as a cofactor.

Its subcellular location is the cytoplasm. The enzyme catalyses Endonucleolytic cleavage at a junction such as a reciprocal single-stranded crossover between two homologous DNA duplexes (Holliday junction).. Its function is as follows. The RuvA-RuvB-RuvC complex processes Holliday junction (HJ) DNA during genetic recombination and DNA repair. Endonuclease that resolves HJ intermediates. Cleaves cruciform DNA by making single-stranded nicks across the HJ at symmetrical positions within the homologous arms, yielding a 5'-phosphate and a 3'-hydroxyl group; requires a central core of homology in the junction. The consensus cleavage sequence is 5'-(A/T)TT(C/G)-3'. Cleavage occurs on the 3'-side of the TT dinucleotide at the point of strand exchange. HJ branch migration catalyzed by RuvA-RuvB allows RuvC to scan DNA until it finds its consensus sequence, where it cleaves and resolves the cruciform DNA. The polypeptide is Crossover junction endodeoxyribonuclease RuvC (Burkholderia lata (strain ATCC 17760 / DSM 23089 / LMG 22485 / NCIMB 9086 / R18194 / 383)).